A 373-amino-acid polypeptide reads, in one-letter code: Transaldolase (373 aa).

Residue K143 is the Schiff-base intermediate with substrate of the active site.

This sequence belongs to the transaldolase family. Type 2 subfamily.

The protein resides in the cytoplasm. The catalysed reaction is D-sedoheptulose 7-phosphate + D-glyceraldehyde 3-phosphate = D-erythrose 4-phosphate + beta-D-fructose 6-phosphate. Its pathway is carbohydrate degradation; pentose phosphate pathway; D-glyceraldehyde 3-phosphate and beta-D-fructose 6-phosphate from D-ribose 5-phosphate and D-xylulose 5-phosphate (non-oxidative stage): step 2/3. Functionally, transaldolase is important for the balance of metabolites in the pentose-phosphate pathway. The polypeptide is Transaldolase (Mycolicibacterium paratuberculosis (strain ATCC BAA-968 / K-10) (Mycobacterium paratuberculosis)).